The chain runs to 312 residues: Tetraacyldisaccharide 4'-kinase (312 aa).

60–67 lines the ATP pocket; sequence IAGGSGKT.

It belongs to the LpxK family.

It carries out the reaction a lipid A disaccharide + ATP = a lipid IVA + ADP + H(+). It functions in the pathway glycolipid biosynthesis; lipid IV(A) biosynthesis; lipid IV(A) from (3R)-3-hydroxytetradecanoyl-[acyl-carrier-protein] and UDP-N-acetyl-alpha-D-glucosamine: step 6/6. Transfers the gamma-phosphate of ATP to the 4'-position of a tetraacyldisaccharide 1-phosphate intermediate (termed DS-1-P) to form tetraacyldisaccharide 1,4'-bis-phosphate (lipid IVA). The chain is Tetraacyldisaccharide 4'-kinase from Helicobacter acinonychis (strain Sheeba).